The sequence spans 438 residues: 3-phosphoshikimate 1-carboxyvinyltransferase (438 aa).

Positions 21, 22, and 26 each coordinate 3-phosphoshikimate. Phosphoenolpyruvate is bound at residue K21. Phosphoenolpyruvate-binding residues include G95 and R123. 3-phosphoshikimate-binding residues include S167, Q169, D315, and K342. Residue Q169 participates in phosphoenolpyruvate binding. D315 functions as the Proton acceptor in the catalytic mechanism. Residues R346 and R387 each coordinate phosphoenolpyruvate.

Belongs to the EPSP synthase family. In terms of assembly, monomer.

It localises to the cytoplasm. It carries out the reaction 3-phosphoshikimate + phosphoenolpyruvate = 5-O-(1-carboxyvinyl)-3-phosphoshikimate + phosphate. It functions in the pathway metabolic intermediate biosynthesis; chorismate biosynthesis; chorismate from D-erythrose 4-phosphate and phosphoenolpyruvate: step 6/7. Catalyzes the transfer of the enolpyruvyl moiety of phosphoenolpyruvate (PEP) to the 5-hydroxyl of shikimate-3-phosphate (S3P) to produce enolpyruvyl shikimate-3-phosphate and inorganic phosphate. This chain is 3-phosphoshikimate 1-carboxyvinyltransferase, found in Coxiella burnetii (strain CbuG_Q212) (Coxiella burnetii (strain Q212)).